We begin with the raw amino-acid sequence, 117 residues long: Antitoxin RelB3 (117 aa).

Functionally, antitoxin component of a type II toxin-antitoxin (TA) system. Neutralizes the effect of cognate toxin RelE3, but no other RelE or ParE toxin. This Caulobacter vibrioides (strain ATCC 19089 / CIP 103742 / CB 15) (Caulobacter crescentus) protein is Antitoxin RelB3 (relB3).